The primary structure comprises 257 residues: Transmembrane protein C257L (257 aa).

The next 2 membrane-spanning stretches (helical) occupy residues 123-143 and 163-183; these read LELLGYSPTSLIGGDLMFTAL and MMIFFLIILLCIILGIFYVLV.

The protein belongs to the asfivirus C257R family.

The protein localises to the host membrane. It is found in the virion. The protein is Transmembrane protein C257L of Ornithodoros (relapsing fever ticks).